A 347-amino-acid chain; its full sequence is GMP reductase (347 aa).

108–131 contributes to the NADP(+) binding site; that stretch reads ADFEKTKQILDLNPALNFVCIDVA. Residues Gly-181 and Gly-183 each coordinate K(+). Cys-186 functions as the Thioimidate intermediate in the catalytic mechanism. An NADP(+)-binding site is contributed by 216–239; it reads IVSDGGCTTPGDVAKAFGGGADFV.

This sequence belongs to the IMPDH/GMPR family. GuaC type 1 subfamily. Homotetramer.

It catalyses the reaction IMP + NH4(+) + NADP(+) = GMP + NADPH + 2 H(+). Its function is as follows. Catalyzes the irreversible NADPH-dependent deamination of GMP to IMP. It functions in the conversion of nucleobase, nucleoside and nucleotide derivatives of G to A nucleotides, and in maintaining the intracellular balance of A and G nucleotides. The protein is GMP reductase of Escherichia coli (strain SMS-3-5 / SECEC).